We begin with the raw amino-acid sequence, 648 residues long: Spastin (648 aa).

The Cytoplasmic segment spans residues 1–40; sequence MASTVALLRDSSDDRENFDDGETDCVQVGRKRKLTVFFYP. The helical intramembrane region spans 41-61; sequence LLLVFWLLRWVFYQFFLVLCF. Topologically, residues 62–648 are cytoplasmic; sequence VCRGFVPRRH…WNREFGDITV (587 aa). In terms of domain architecture, MIT spans 99–174; it reads HKKAFDFISK…EMARDRLDFL (76 aa). The interval 188–346 is disordered; the sequence is PWHGGVAPAQ…SQRSLLSSRV (159 aa). The segment covering 247–266 has biased composition (low complexity); that stretch reads TGVTLRRQQQQQLGGVSTVS. Residue 414 to 421 participates in ATP binding; the sequence is GPPGNGKT.

Belongs to the AAA ATPase family. Spastin subfamily. In terms of assembly, homohexamer. The homohexamer is stabilized by ATP-binding. The homohexamer may adopt a ring conformation through which microtubules pass prior to being severed. Interacts with microtubules.

The protein localises to the membrane. Its subcellular location is the cytoplasm. It localises to the cytoskeleton. It is found in the microtubule organizing center. The protein resides in the centrosome. The enzyme catalyses n ATP + n H2O + a microtubule = n ADP + n phosphate + (n+1) alpha/beta tubulin heterodimers.. ATP-dependent microtubule severing protein. Microtubule severing may promote reorganization of cellular microtubule arrays and the release of microtubules from the microtubule organizing center following nucleation. This chain is Spastin (spas), found in Ixodes scapularis (Black-legged tick).